Here is a 130-residue protein sequence, read N- to C-terminus: Small ribosomal subunit protein uS11c (130 aa).

It belongs to the universal ribosomal protein uS11 family. In terms of assembly, part of the 30S ribosomal subunit.

The protein localises to the plastid. The protein resides in the chloroplast. The sequence is that of Small ribosomal subunit protein uS11c from Chlorella vulgaris (Green alga).